A 264-amino-acid chain; its full sequence is 3-methyl-2-oxobutanoate hydroxymethyltransferase (264 aa).

Mg(2+) contacts are provided by Asp-45 and Asp-84. Residues 45–46, Asp-84, and Lys-112 each bind 3-methyl-2-oxobutanoate; that span reads DS. Position 114 (Glu-114) interacts with Mg(2+). The active-site Proton acceptor is the Glu-181.

Belongs to the PanB family. Homodecamer; pentamer of dimers. Mg(2+) is required as a cofactor.

It is found in the cytoplasm. The enzyme catalyses 3-methyl-2-oxobutanoate + (6R)-5,10-methylene-5,6,7,8-tetrahydrofolate + H2O = 2-dehydropantoate + (6S)-5,6,7,8-tetrahydrofolate. The protein operates within cofactor biosynthesis; (R)-pantothenate biosynthesis; (R)-pantoate from 3-methyl-2-oxobutanoate: step 1/2. Functionally, catalyzes the reversible reaction in which hydroxymethyl group from 5,10-methylenetetrahydrofolate is transferred onto alpha-ketoisovalerate to form ketopantoate. This chain is 3-methyl-2-oxobutanoate hydroxymethyltransferase, found in Psychromonas ingrahamii (strain DSM 17664 / CCUG 51855 / 37).